We begin with the raw amino-acid sequence, 311 residues long: Methionyl-tRNA formyltransferase (311 aa).

110–113 (SLLP) is a binding site for (6S)-5,6,7,8-tetrahydrofolate.

This sequence belongs to the Fmt family.

The enzyme catalyses L-methionyl-tRNA(fMet) + (6R)-10-formyltetrahydrofolate = N-formyl-L-methionyl-tRNA(fMet) + (6S)-5,6,7,8-tetrahydrofolate + H(+). Attaches a formyl group to the free amino group of methionyl-tRNA(fMet). The formyl group appears to play a dual role in the initiator identity of N-formylmethionyl-tRNA by promoting its recognition by IF2 and preventing the misappropriation of this tRNA by the elongation apparatus. This Streptococcus equi subsp. zooepidemicus (strain H70) protein is Methionyl-tRNA formyltransferase.